The following is a 116-amino-acid chain: MSNHRIERVGMEIKREVNEILQKKVRDPRVQGVTITDVQMSGDLSLAKVYYTIMSDLASDNQKVQIGLEKAKGTIKRELGKNLTMYKIPDLTFIKDESIEYGNKIDQMLRDLEKRN.

Belongs to the RbfA family. As to quaternary structure, monomer. Binds 30S ribosomal subunits, but not 50S ribosomal subunits or 70S ribosomes.

Its subcellular location is the cytoplasm. Its function is as follows. One of several proteins that assist in the late maturation steps of the functional core of the 30S ribosomal subunit. Associates with free 30S ribosomal subunits (but not with 30S subunits that are part of 70S ribosomes or polysomes). Required for efficient processing of 16S rRNA. May interact with the 5'-terminal helix region of 16S rRNA. The chain is Ribosome-binding factor A from Streptococcus mutans serotype c (strain ATCC 700610 / UA159).